Reading from the N-terminus, the 734-residue chain is Photosystem I P700 chlorophyll a apoprotein A2 (734 aa).

8 consecutive transmembrane segments (helical) span residues 46-69, 135-158, 175-199, 273-291, 330-353, 369-395, 417-439, and 517-535; these read IFAS…FHVA, LYTG…LHLQ, LNHH…HVAI, IAHH…GHMY, LHFQ…QHMY, AALY…IFFI, AITS…LYVH, and FLVH…LILV. Positions 559 and 568 each coordinate [4Fe-4S] cluster. Transmembrane regions (helical) follow at residues 575–596 and 643–665; these read AFYL…YWHW and LSVW…MFLI. H654, M662, and Y670 together coordinate chlorophyll a. W671 is a phylloquinone binding site. A helical transmembrane segment spans residues 707-727; that stretch reads LVGLVHFSVGYIFTYAAFLIA.

Belongs to the PsaA/PsaB family. The PsaA/B heterodimer binds the P700 chlorophyll special pair and subsequent electron acceptors. PSI consists of a core antenna complex that captures photons, and an electron transfer chain that converts photonic excitation into a charge separation. The eukaryotic PSI reaction center is composed of at least 11 subunits. P700 is a chlorophyll a/chlorophyll a' dimer, A0 is one or more chlorophyll a, A1 is one or both phylloquinones and FX is a shared 4Fe-4S iron-sulfur center. serves as cofactor.

The protein localises to the plastid. It is found in the chloroplast thylakoid membrane. The catalysed reaction is reduced [plastocyanin] + hnu + oxidized [2Fe-2S]-[ferredoxin] = oxidized [plastocyanin] + reduced [2Fe-2S]-[ferredoxin]. Functionally, psaA and PsaB bind P700, the primary electron donor of photosystem I (PSI), as well as the electron acceptors A0, A1 and FX. PSI is a plastocyanin-ferredoxin oxidoreductase, converting photonic excitation into a charge separation, which transfers an electron from the donor P700 chlorophyll pair to the spectroscopically characterized acceptors A0, A1, FX, FA and FB in turn. Oxidized P700 is reduced on the lumenal side of the thylakoid membrane by plastocyanin. This Phalaenopsis aphrodite subsp. formosana (Moth orchid) protein is Photosystem I P700 chlorophyll a apoprotein A2.